A 226-amino-acid polypeptide reads, in one-letter code: MPFDPRTTPLTAVEARVLATLMEKARTVPDSYPLTLNALVTGCNQKSSRDPVMEVSEGEAQEALDSLRLRTMSVQISSARATRWEHNFPRGVGVPDQSAVLLSLLMLRGPQTAGELRINSERWHRFADISSVEAFLEELRERSEEKGGPLVVLLPRAPGAREQRWAHLLCGPVDVNAMAQPPAAAGARGDALAQRVVDLEAQVQQLQARLAHVYAQLGLEEPGQSS.

Belongs to the UPF0502 family.

The polypeptide is UPF0502 protein Daci_5373 (Delftia acidovorans (strain DSM 14801 / SPH-1)).